The chain runs to 128 residues: Lymphocyte antigen 6D (128 aa).

A signal peptide spans 1 to 20 (MRTALLLLAALAVATGPALT). A UPAR/Ly6 domain is found at 21–108 (LRCHVCTSSS…AAPTRTALAH (88 aa)). 5 cysteine pairs are disulfide-bonded: cysteine 23–cysteine 45, cysteine 26–cysteine 32, cysteine 38–cysteine 63, cysteine 67–cysteine 86, and cysteine 87–cysteine 92. Asparagine 98 carries the GPI-anchor amidated asparagine lipid modification. A propeptide spans 99 to 128 (AAPTRTALAHSALSLGLALSLLAVILAPSL) (removed in mature form).

Expressed exclusively at the outer cell surface of transitional epithelia and the keratinocyte of stratified squamous epithelia.

The protein resides in the cell membrane. Functionally, may act as a specification marker at earliest stage specification of lymphocytes between B- and T-cell development. Marks the earliest stage of B-cell specification. This is Lymphocyte antigen 6D (LY6D) from Homo sapiens (Human).